The chain runs to 188 residues: Cell division protein SepF (188 aa).

This sequence belongs to the SepF family. Homodimer. Interacts with FtsZ.

It is found in the cytoplasm. Functionally, cell division protein that is part of the divisome complex and is recruited early to the Z-ring. Probably stimulates Z-ring formation, perhaps through the cross-linking of FtsZ protofilaments. Its function overlaps with FtsA. The chain is Cell division protein SepF from Synechococcus sp. (strain CC9605).